An 850-amino-acid polypeptide reads, in one-letter code: Protein argonaute 8 (850 aa).

The segment at 1 to 30 (MDTTLPPPQHMEREPLKSKSSLLPMTRRGN) is disordered. A PAZ domain is found at 247–361 (PVVDFLIANQ…FPIELCELVS (115 aa)). Positions 518-811 (QSILGEVPPK…AAAQMATAMK (294 aa)) constitute a Piwi domain.

This sequence belongs to the argonaute family. Ago subfamily.

Its function is as follows. Involved in RNA-mediated post-transcriptional gene silencing (PTGS). Main component of the RNA-induced silencing complex (RISC) that binds to a short guide RNA such as a microRNA (miRNA) or small interfering RNA (siRNA). RISC uses the mature miRNA or siRNA as a guide for slicer-directed cleavage of homologous mRNAs to repress gene expression. The chain is Protein argonaute 8 (AGO8) from Arabidopsis thaliana (Mouse-ear cress).